Reading from the N-terminus, the 291-residue chain is N-acetylmannosamine kinase (291 aa).

ATP contacts are provided by residues alanine 5–lysine 12 and glycine 132–serine 139. Histidine 156, cysteine 166, cysteine 168, and cysteine 173 together coordinate Zn(2+).

The protein belongs to the ROK (NagC/XylR) family. NanK subfamily. Homodimer.

It catalyses the reaction an N-acyl-D-mannosamine + ATP = an N-acyl-D-mannosamine 6-phosphate + ADP + H(+). The protein operates within amino-sugar metabolism; N-acetylneuraminate degradation; D-fructose 6-phosphate from N-acetylneuraminate: step 2/5. Its function is as follows. Catalyzes the phosphorylation of N-acetylmannosamine (ManNAc) to ManNAc-6-P. In Escherichia coli O9:H4 (strain HS), this protein is N-acetylmannosamine kinase.